We begin with the raw amino-acid sequence, 659 residues long: RNA-binding E3 ubiquitin-protein ligase MEX3C (659 aa).

Low complexity predominate over residues 1 to 15 (MPSGSSAALALAAAP). Positions 1-140 (MPSGSSAALA…EEAEEEDRSS (140 aa)) are disordered. Positions 16–37 (APLPQPPPPPPPPPPPLPPPSG) are enriched in pro residues. The span at 64 to 82 (EPGAPALRAPAAAAQGQAR) shows a compositional bias: low complexity. A compositionally biased stretch (basic and acidic residues) spans 83-94 (RAAELSPEERAP). S88 is subject to Phosphoserine. Residues 104–137 (AELELEEDEEEGEEAELDGDLLEEEELEEAEEED) are compositionally biased toward acidic residues. 2 consecutive KH domains span residues 232 to 293 (TTEC…KREI) and 326 to 387 (QTTV…REEI). Residues 513–569 (FEPVNPLSGFGSDPSGNMKTQRRGSQPSTPRLSPTFPESIEHPLARRVRSDPPSTGN) form a disordered region. The segment covering 526–544 (PSGNMKTQRRGSQPSTPRL) has biased composition (polar residues). Residues S537 and S545 each carry the phosphoserine modification. Over residues 551–562 (SIEHPLARRVRS) the composition is skewed to basic and acidic residues. An RING-type zinc finger spans residues 608 to 648 (CVICFENEVIAALVPCGHNLFCMECANKICEKRTPSCPVCQ).

In terms of assembly, interacts with USP7, which antagonizes the ability to degrade mRNA. As to expression, highest levels found in fetal brain and testis. Also expressed in thymus, salivary gland and uterus. Highly expressed in cells of the innate immune system, in particular activated NK cells. Week expression in the intestine.

Its subcellular location is the cytoplasm. It localises to the nucleus. The catalysed reaction is S-ubiquitinyl-[E2 ubiquitin-conjugating enzyme]-L-cysteine + [acceptor protein]-L-lysine = [E2 ubiquitin-conjugating enzyme]-L-cysteine + N(6)-ubiquitinyl-[acceptor protein]-L-lysine.. Functionally, E3 ubiquitin ligase responsible for the post-transcriptional regulation of common HLA-A allotypes. Binds to the 3' UTR of HLA-A2 mRNA, and regulates its levels by promoting mRNA decay. RNA binding is sufficient to prevent translation, but ubiquitin ligase activity is required for mRNA degradation. This Homo sapiens (Human) protein is RNA-binding E3 ubiquitin-protein ligase MEX3C (MEX3C).